A 493-amino-acid chain; its full sequence is ATP-dependent rRNA helicase RRP3 (493 aa).

Basic and acidic residues-rich tracts occupy residues 26–42 (ALEN…KDSE) and 51–62 (ERPAKKQAKDEK). Residues 26-68 (ALENQKKMQAASRKDSESDSSDEEVERPAKKQAKDEKVEEPEE) form a disordered region. The Q motif motif lies at 73-101 (ESFAQLNLVPELIQACQNLNFTKPTPIQA). The 173-residue stretch at 104–276 (IPPALAGSDV…RASLTNPVKC (173 aa)) folds into the Helicase ATP-binding domain. 117–124 (AQTGSGKT) is an ATP binding site. A DEAD box motif is present at residues 223–226 (DEAD). The region spanning 307 to 453 (LLNEFIGKTV…NIILTLRDSV (147 aa)) is the Helicase C-terminal domain. Positions 467 to 493 (RNKEKQARGKGRRGRMMAKENMDREEK) are disordered. The span at 483–493 (MAKENMDREEK) shows a compositional bias: basic and acidic residues.

The protein belongs to the DEAD box helicase family. DDX47/RRP3 subfamily. In terms of assembly, interacts with the SSU processome.

The protein localises to the nucleus. It catalyses the reaction ATP + H2O = ADP + phosphate + H(+). ATP-dependent rRNA helicase required for pre-ribosomal RNA processing. Involved in the maturation of the 35S-pre-rRNA and to its cleavage to mature 18S rRNA. In Candida glabrata (strain ATCC 2001 / BCRC 20586 / JCM 3761 / NBRC 0622 / NRRL Y-65 / CBS 138) (Yeast), this protein is ATP-dependent rRNA helicase RRP3.